A 246-amino-acid chain; its full sequence is Vacuolar iron transporter 2 (246 aa).

The Cytoplasmic segment spans residues 1–32 (MVKEFVQDEEKQRLLLDEHTEKHFTAGEVVRD). A helical membrane pass occupies residues 33–53 (IIIGVSDGLTVPFALAAGLSG). Residues 54-58 (ANAPS) are Vacuolar-facing. A helical transmembrane segment spans residues 59–79 (ALVLTAGLAEVAAGAISMGLG). At 80-164 (GYLAAKSDAD…PEPRRALMSA (85 aa)) the chain is on the cytoplasmic side. Residues 86-161 (SDADHYHREL…LEKPEPRRAL (76 aa)) form a cytoplasmic metal binding domain (MBD) region. 6 residues coordinate Fe cation: Glu-98, Glu-101, Glu-109, Glu-112, Met-145, and Glu-149. A helical membrane pass occupies residues 165–185 (GTIALAYVVGGLVPLLPYMFV). Over 186 to 190 (PTADR) the chain is Vacuolar. A helical transmembrane segment spans residues 191 to 211 (AMATSVVVTLAALLFFGYVKG). Topologically, residues 212–218 (RFTGNRP) are cytoplasmic. Residues 219 to 239 (FISAFQTAVIGALASAAAFGM) traverse the membrane as a helical segment. Residues 240-246 (AKAVQSI) are Vacuolar-facing.

Belongs to the CCC1 family. Homodimer. The dimeric interaction is mediated by both the transmembrane domains (TMDs) and the cytoplasmic metal binding domain (MBD). In terms of tissue distribution, expressed in leaf sheaths and at lower level in leaf blades.

It localises to the vacuole membrane. It catalyses the reaction Fe(2+)(in) = Fe(2+)(out). Functionally, vacuolar iron transporter involved in the transfer of iron ions from the cytosol to the vacuole for intracellular iron storage. Vacuolar iron storage is required for seed embryo and seedling development. May be involved in the regulation of iron translocation between flag leaves and seeds. Can transport zinc ions from the cytosol to the vacuole. This Oryza sativa subsp. japonica (Rice) protein is Vacuolar iron transporter 2.